Here is a 215-residue protein sequence, read N- to C-terminus: Cytochrome b6 (215 aa).

Residues 32-52 (IFYCLGGVTLICFLVQFATGF) form a helical membrane-spanning segment. Cys35 is a binding site for heme c. The heme b site is built by His86 and His100. A run of 3 helical transmembrane segments spans residues 90 to 110 (ASMM…TGGF), 116 to 136 (LTWV…VTGY), and 186 to 206 (AHTF…FLMI). Heme b-binding residues include His187 and His202.

This sequence belongs to the cytochrome b family. PetB subfamily. As to quaternary structure, the 4 large subunits of the cytochrome b6-f complex are cytochrome b6, subunit IV (17 kDa polypeptide, PetD), cytochrome f and the Rieske protein, while the 4 small subunits are PetG, PetL, PetM and PetN. The complex functions as a dimer. Requires heme b as cofactor. The cofactor is heme c.

It localises to the cell inner membrane. Its function is as follows. Component of the cytochrome b6-f complex, which mediates electron transfer between photosystem II (PSII) and photosystem I (PSI), cyclic electron flow around PSI, and state transitions. The sequence is that of Cytochrome b6 from Gloeobacter violaceus (strain ATCC 29082 / PCC 7421).